The chain runs to 334 residues: Glucokinase-like protein XF_1460 (334 aa).

18-23 (ADVGGT) contacts ATP.

It belongs to the bacterial glucokinase family.

The sequence is that of Glucokinase-like protein XF_1460 from Xylella fastidiosa (strain 9a5c).